The chain runs to 360 residues: Glutamate 5-kinase (360 aa).

Lys7 contacts ATP. Substrate-binding residues include Ser47, Asp134, and Asn146. Residues 166–167 (TD) and 208–214 (TGGIKTK) each bind ATP. In terms of domain architecture, PUA spans 273–344 (VGEIHLDDGA…IGINSRSETT (72 aa)).

The protein belongs to the glutamate 5-kinase family.

The protein resides in the cytoplasm. The enzyme catalyses L-glutamate + ATP = L-glutamyl 5-phosphate + ADP. Its pathway is amino-acid biosynthesis; L-proline biosynthesis; L-glutamate 5-semialdehyde from L-glutamate: step 1/2. In terms of biological role, catalyzes the transfer of a phosphate group to glutamate to form L-glutamate 5-phosphate. The polypeptide is Glutamate 5-kinase (Prochlorococcus marinus (strain NATL2A)).